The sequence spans 1914 residues: Autophagy-related protein 2 homolog A (1914 aa).

The region spanning 14–112 is the Chorein N-terminal domain; sequence ERVCRYLLQH…LTLQPRQGSG (99 aa). S764, S869, S875, and S877 each carry phosphoserine. The segment at 1222-1243 is disordered; the sequence is DLHPPPRPPSPTEIAGQKLSES. A phosphoserine mark is found at S1246, S1282, and S1290. A disordered region spans residues 1299 to 1337; it reads GERSGAQAPLPPPGASSHTLGSKAKEHENEEEGDGDTLD. The span at 1327–1337 shows a compositional bias: acidic residues; it reads NEEEGDGDTLD. The segment at 1337–1383 is WIPI-interacting; it reads DSDEFCILDAPGLGIAPRDGEPIVTQLHPGPIIVHDGHFSQPLGSTD. S1381 is modified (phosphoserine). Disordered stretches follow at residues 1427–1452, 1589–1634, and 1803–1822; these read LTGPRVSPSRSSGPNRPQNSWRTQGG, MVPG…SSSD, and RSLQDKRSSRKLRRGQQPAD. Low complexity predominate over residues 1429–1446; that stretch reads GPRVSPSRSSGPNRPQNS.

This sequence belongs to the ATG2 family. As to quaternary structure, interacts with ATG9A (via C-terminus). Interacts with TMEM41B. Interacts with VMP1.

Its subcellular location is the preautophagosomal structure membrane. The protein localises to the lipid droplet. The protein resides in the endoplasmic reticulum membrane. It carries out the reaction a 1,2-diacyl-sn-glycero-3-phospho-L-serine(in) = a 1,2-diacyl-sn-glycero-3-phospho-L-serine(out). The enzyme catalyses a 1,2-diacyl-sn-glycero-3-phosphoethanolamine(in) = a 1,2-diacyl-sn-glycero-3-phosphoethanolamine(out). Its function is as follows. Lipid transfer protein involved in autophagosome assembly. Tethers the edge of the isolation membrane (IM) to the endoplasmic reticulum (ER) and mediates direct lipid transfer from ER to IM for IM expansion. Binds to the ER exit site (ERES), which is the membrane source for autophagosome formation, and extracts phospholipids from the membrane source and transfers them to ATG9 (ATG9A or ATG9B) to the IM for membrane expansion. Lipid transfer activity is enhanced by WIPI1 and WDR45/WIPI4, which promote ATG2A-association with phosphatidylinositol 3-monophosphate (PI3P)-containing membranes. Also regulates lipid droplets morphology and distribution within the cell. In terms of biological role, (Microbial infection) Mediates the intracellular lifestyle of Cryptococcus neoformans by supporting infection. The chain is Autophagy-related protein 2 homolog A from Mus musculus (Mouse).